A 556-amino-acid polypeptide reads, in one-letter code: Cytochrome P450 4g1 (556 aa).

Positions 356 and 497 each coordinate heme.

The protein belongs to the cytochrome P450 family. Requires heme as cofactor.

Its subcellular location is the endoplasmic reticulum membrane. It is found in the microsome membrane. Its function is as follows. May be involved in the metabolism of insect hormones and in the breakdown of synthetic insecticides. This is Cytochrome P450 4g1 (Cyp4g1) from Drosophila melanogaster (Fruit fly).